The primary structure comprises 485 residues: Glutamyl-tRNA(Gln) amidotransferase subunit A (485 aa).

Catalysis depends on charge relay system residues Lys-78 and Ser-153. The active-site Acyl-ester intermediate is Ser-177.

It belongs to the amidase family. GatA subfamily. Heterotrimer of A, B and C subunits.

The catalysed reaction is L-glutamyl-tRNA(Gln) + L-glutamine + ATP + H2O = L-glutaminyl-tRNA(Gln) + L-glutamate + ADP + phosphate + H(+). Functionally, allows the formation of correctly charged Gln-tRNA(Gln) through the transamidation of misacylated Glu-tRNA(Gln) in organisms which lack glutaminyl-tRNA synthetase. The reaction takes place in the presence of glutamine and ATP through an activated gamma-phospho-Glu-tRNA(Gln). This chain is Glutamyl-tRNA(Gln) amidotransferase subunit A, found in Desulfotalea psychrophila (strain LSv54 / DSM 12343).